A 303-amino-acid chain; its full sequence is Quinolinate synthase (303 aa).

His23 and Ser40 together coordinate iminosuccinate. Cys85 lines the [4Fe-4S] cluster pocket. Iminosuccinate-binding positions include 111–113 and Ser128; that span reads YVN. Cys171 lines the [4Fe-4S] cluster pocket. Iminosuccinate-binding positions include 197–199 and Thr214; that span reads HPE. [4Fe-4S] cluster is bound at residue Cys259.

Belongs to the quinolinate synthase family. Type 2 subfamily. [4Fe-4S] cluster serves as cofactor.

It is found in the cytoplasm. It carries out the reaction iminosuccinate + dihydroxyacetone phosphate = quinolinate + phosphate + 2 H2O + H(+). It participates in cofactor biosynthesis; NAD(+) biosynthesis; quinolinate from iminoaspartate: step 1/1. Its function is as follows. Catalyzes the condensation of iminoaspartate with dihydroxyacetone phosphate to form quinolinate. This is Quinolinate synthase from Thermodesulfovibrio yellowstonii (strain ATCC 51303 / DSM 11347 / YP87).